The chain runs to 769 residues: Endonuclease MutS2 (769 aa).

Position 335-342 (335-342 (GGNAGGKT)) interacts with ATP. A Smr domain is found at 694-769 (IDLRGKRADV…GDGMTEVELV (76 aa)).

Belongs to the DNA mismatch repair MutS family. MutS2 subfamily. As to quaternary structure, homodimer. Binds to stalled ribosomes, contacting rRNA.

Functionally, endonuclease that is involved in the suppression of homologous recombination and thus may have a key role in the control of bacterial genetic diversity. Acts as a ribosome collision sensor, splitting the ribosome into its 2 subunits. Detects stalled/collided 70S ribosomes which it binds and splits by an ATP-hydrolysis driven conformational change. Acts upstream of the ribosome quality control system (RQC), a ribosome-associated complex that mediates the extraction of incompletely synthesized nascent chains from stalled ribosomes and their subsequent degradation. Probably generates substrates for RQC. In Maridesulfovibrio salexigens (strain ATCC 14822 / DSM 2638 / NCIMB 8403 / VKM B-1763) (Desulfovibrio salexigens), this protein is Endonuclease MutS2.